Here is a 680-residue protein sequence, read N- to C-terminus: DNA-directed RNA polymerase subunit beta' (680 aa).

Zn(2+)-binding residues include Cys-68, Cys-70, Cys-86, and Cys-89. Asp-488, Asp-490, and Asp-492 together coordinate Mg(2+).

It belongs to the RNA polymerase beta' chain family. RpoC1 subfamily. In plastids the minimal PEP RNA polymerase catalytic core is composed of four subunits: alpha, beta, beta', and beta''. When a (nuclear-encoded) sigma factor is associated with the core the holoenzyme is formed, which can initiate transcription. Mg(2+) is required as a cofactor. Requires Zn(2+) as cofactor.

It localises to the plastid. The protein localises to the chloroplast. The enzyme catalyses RNA(n) + a ribonucleoside 5'-triphosphate = RNA(n+1) + diphosphate. Its function is as follows. DNA-dependent RNA polymerase catalyzes the transcription of DNA into RNA using the four ribonucleoside triphosphates as substrates. The sequence is that of DNA-directed RNA polymerase subunit beta' from Nicotiana tabacum (Common tobacco).